The sequence spans 267 residues: Hydroxypyruvate/pyruvate aldolase Bphyt_5830 (267 aa).

His48 functions as the Proton acceptor in the catalytic mechanism. The a divalent metal cation site is built by Glu152 and Asp178.

This sequence belongs to the HpcH/HpaI aldolase family. It depends on a divalent metal cation as a cofactor.

It catalyses the reaction D-glyceraldehyde + 3-hydroxypyruvate = 2-dehydro-D-galactonate. It carries out the reaction D-glyceraldehyde + 3-hydroxypyruvate = (3R,4S,5R)-3,4,5,6-tetrahydroxy-2-oxohexanoate. The enzyme catalyses D-glyceraldehyde + pyruvate = 2-dehydro-3-deoxy-L-galactonate. Aldolase which can catalyze in vitro the aldolisation reaction between hydroxypyruvate (HPA) or pyruvate (PA) and D-glyceraldehyde (D-GA). The condensation of hydroxypyruvate and D-glyceraldehyde produces 2-dehydro-D-galactonate as the major product and (3R,4S,5R)-3,4,5,6-tetrahydroxy-2-oxohexanoate. The condensation of pyruvate and D-glyceraldehyde produces 2-dehydro-3-deoxy-L-galactonate. The chain is Hydroxypyruvate/pyruvate aldolase Bphyt_5830 from Paraburkholderia phytofirmans (strain DSM 17436 / LMG 22146 / PsJN) (Burkholderia phytofirmans).